We begin with the raw amino-acid sequence, 994 residues long: Zinc finger protein basonuclin-1 (994 aa).

A disordered region spans residues 1 to 29; sequence MRRRPPSRGGRGAARARETRRQPRHRSGR. The hydrophobic stretch occupies residues 240 to 249; it reads MTFMLPFQFF. 2 consecutive C2H2-type zinc fingers follow at residues 357 to 380 and 385 to 414; these read VFCT…NAVH and HKCT…PRLH. Disordered regions lie at residues 402–425 and 444–472; these read RNRH…RDKD and TVTS…FPNI. The Nuclear localization signal motif lies at 533-539; sequence PKKKSRK. Ser537 and Ser541 each carry phosphoserine. Residues 555–639 form a disordered region; sequence NEKRHNLSSD…HNSERETEQT (85 aa). Over residues 563–578 the composition is skewed to acidic residues; the sequence is SDEDMPLQVVSEDEQE. Residues 603-614 show a composition bias toward basic and acidic residues; that stretch reads PEGERPCHRESV. A compositionally biased stretch (polar residues) spans 615–630; it reads IESSGAISQTPEQATH. 2 consecutive C2H2-type zinc fingers follow at residues 720–743 and 748–775; these read FQCD…KNMH and HTCT…LNLH. Residues 859–877 are compositionally biased toward low complexity; that stretch reads STTSSMKSESSSHSSWDSD. The interval 859–881 is disordered; that stretch reads STTSSMKSESSSHSSWDSDGVSE. 2 consecutive C2H2-type zinc fingers follow at residues 928–951 and 956–983; these read ITCH…KTVH and HKCK…PNLH. The tract at residues 970–994 is disordered; it reads VRSRNRHSQNPNLHKSLASSPSHLQ.

As to quaternary structure, interacts with HSF2BP (via C-terminus). Post-translationally, phosphorylation on Ser-537 and Ser-541 leads to cytoplasmic localization. In epidermis, primarily detected in cells of the basal or immediately suprabasal layers (at protein level). In hair follicles, mainly expressed in the outer root sheath (at protein level). Expressed in epidermis, testis and foreskin, and to a lower extent in thymus, spleen, mammary glands, placenta, brain and heart. Expressed in the ovary, notably in oocytes.

The protein localises to the nucleus. Its subcellular location is the cytoplasm. It is found in the nucleoplasm. In terms of biological role, transcriptional activator. It is likely involved in the regulation of keratinocytes terminal differentiation in squamous epithelia and hair follicles. Required for the maintenance of spermatogenesis. It is involved in the positive regulation of oocyte maturation, probably acting through the control of BMP15 levels and regulation of AKT signaling cascade. May also play a role in the early development of embryos. The protein is Zinc finger protein basonuclin-1 (BNC1) of Homo sapiens (Human).